Here is a 938-residue protein sequence, read N- to C-terminus: Isoleucine--tRNA ligase (938 aa).

Residues 61–71 carry the 'HIGH' region motif; sequence PYANGDIHLGT. Glu559 provides a ligand contact to L-isoleucyl-5'-AMP. The 'KMSKS' region motif lies at 601 to 605; that stretch reads KMSKS. Lys604 contacts ATP. Zn(2+) is bound by residues Cys904, Cys907, Cys923, and Cys926.

It belongs to the class-I aminoacyl-tRNA synthetase family. IleS type 1 subfamily. Monomer. It depends on Zn(2+) as a cofactor.

The protein resides in the cytoplasm. It catalyses the reaction tRNA(Ile) + L-isoleucine + ATP = L-isoleucyl-tRNA(Ile) + AMP + diphosphate. In terms of biological role, catalyzes the attachment of isoleucine to tRNA(Ile). As IleRS can inadvertently accommodate and process structurally similar amino acids such as valine, to avoid such errors it has two additional distinct tRNA(Ile)-dependent editing activities. One activity is designated as 'pretransfer' editing and involves the hydrolysis of activated Val-AMP. The other activity is designated 'posttransfer' editing and involves deacylation of mischarged Val-tRNA(Ile). This chain is Isoleucine--tRNA ligase, found in Symbiobacterium thermophilum (strain DSM 24528 / JCM 14929 / IAM 14863 / T).